We begin with the raw amino-acid sequence, 249 residues long: Small ribosomal subunit protein uS2 (249 aa).

It belongs to the universal ribosomal protein uS2 family.

The polypeptide is Small ribosomal subunit protein uS2 (Chlorobaculum tepidum (strain ATCC 49652 / DSM 12025 / NBRC 103806 / TLS) (Chlorobium tepidum)).